The chain runs to 227 residues: Cytochrome c oxidase subunit 2 (227 aa).

The Mitochondrial intermembrane segment spans residues 1–14 (MAYPFQLGLQDATS). A helical transmembrane segment spans residues 15–45 (PIMEELTNFHDHTLMIVFLISSLVLYIISLM). At 46–59 (LTTKLTHTSTMDAQ) the chain is on the mitochondrial matrix side. The helical transmembrane segment at 60-87 (EVETIWTILPAVILILIALPSLRILYMM) threads the bilayer. The Mitochondrial intermembrane segment spans residues 88-227 (DEINNPVLTV…YFENWSASMI (140 aa)). Residues His-161, Cys-196, Glu-198, Cys-200, His-204, and Met-207 each contribute to the Cu cation site. Glu-198 serves as a coordination point for Mg(2+). The residue at position 218 (Tyr-218) is a Phosphotyrosine.

Belongs to the cytochrome c oxidase subunit 2 family. In terms of assembly, component of the cytochrome c oxidase (complex IV, CIV), a multisubunit enzyme composed of 14 subunits. The complex is composed of a catalytic core of 3 subunits MT-CO1, MT-CO2 and MT-CO3, encoded in the mitochondrial DNA, and 11 supernumerary subunits COX4I, COX5A, COX5B, COX6A, COX6B, COX6C, COX7A, COX7B, COX7C, COX8 and NDUFA4, which are encoded in the nuclear genome. The complex exists as a monomer or a dimer and forms supercomplexes (SCs) in the inner mitochondrial membrane with NADH-ubiquinone oxidoreductase (complex I, CI) and ubiquinol-cytochrome c oxidoreductase (cytochrome b-c1 complex, complex III, CIII), resulting in different assemblies (supercomplex SCI(1)III(2)IV(1) and megacomplex MCI(2)III(2)IV(2)). Found in a complex with TMEM177, COA6, COX18, COX20, SCO1 and SCO2. Interacts with TMEM177 in a COX20-dependent manner. Interacts with COX20. Interacts with COX16. Cu cation is required as a cofactor.

The protein localises to the mitochondrion inner membrane. The enzyme catalyses 4 Fe(II)-[cytochrome c] + O2 + 8 H(+)(in) = 4 Fe(III)-[cytochrome c] + 2 H2O + 4 H(+)(out). Its function is as follows. Component of the cytochrome c oxidase, the last enzyme in the mitochondrial electron transport chain which drives oxidative phosphorylation. The respiratory chain contains 3 multisubunit complexes succinate dehydrogenase (complex II, CII), ubiquinol-cytochrome c oxidoreductase (cytochrome b-c1 complex, complex III, CIII) and cytochrome c oxidase (complex IV, CIV), that cooperate to transfer electrons derived from NADH and succinate to molecular oxygen, creating an electrochemical gradient over the inner membrane that drives transmembrane transport and the ATP synthase. Cytochrome c oxidase is the component of the respiratory chain that catalyzes the reduction of oxygen to water. Electrons originating from reduced cytochrome c in the intermembrane space (IMS) are transferred via the dinuclear copper A center (CU(A)) of subunit 2 and heme A of subunit 1 to the active site in subunit 1, a binuclear center (BNC) formed by heme A3 and copper B (CU(B)). The BNC reduces molecular oxygen to 2 water molecules using 4 electrons from cytochrome c in the IMS and 4 protons from the mitochondrial matrix. The chain is Cytochrome c oxidase subunit 2 (MT-CO2) from Dacnomys millardi (Millard's rat).